Reading from the N-terminus, the 335-residue chain is DNA polymerase beta (335 aa).

Residue Lys41 forms a Glycyl lysine isopeptide (Lys-Gly) (interchain with G-Cter in ubiquitin) linkage. Lys60 contributes to the K(+) binding site. Lys60 serves as a coordination point for Na(+). Residue Lys61 forms a Glycyl lysine isopeptide (Lys-Gly) (interchain with G-Cter in ubiquitin) linkage. K(+) contacts are provided by Leu62 and Val65. Na(+)-binding residues include Leu62 and Val65. Lys72 functions as the Nucleophile; Schiff-base intermediate with DNA; for 5'-dRP lyase activity in the catalytic mechanism. Lys72 is modified (N6-acetyllysine). Lys81 is covalently cross-linked (Glycyl lysine isopeptide (Lys-Gly) (interchain with G-Cter in ubiquitin)). The residue at position 83 (Arg83) is an Omega-N-methylarginine; by PRMT6. Thr101, Val103, and Ile106 together coordinate K(+). Thr101, Val103, and Ile106 together coordinate Na(+). Arg149 contacts a 2'-deoxyribonucleoside 5'-triphosphate. Residue Arg152 is modified to Omega-N-methylarginine; by PRMT6. A 2'-deoxyribonucleoside 5'-triphosphate is bound by residues Ser180, Arg183, Gly189, and Asp190. Positions 183-192 are DNA-binding; sequence RGAESSGDMD. Positions 190, 192, and 256 each coordinate Mg(2+).

Belongs to the DNA polymerase type-X family. As to quaternary structure, monomer. Binds single-stranded DNA (ssDNA). Interacts with APEX1, LIG1, LIG3, FEN1, PCNA and XRCC1. Interacts with HUWE1/ARF-BP1, STUB1/CHIP and USP47. Interacts with FAM168A. Mg(2+) serves as cofactor. In terms of processing, methylation by PRMT6 stimulates the polymerase activity by enhancing DNA binding and processivity. Post-translationally, ubiquitinated at Lys-41, Lys-61 and Lys-81: monoubiquitinated by HUWE1/ARF-BP1. Monoubiquitinated protein is then the target of STUB1/CHIP, which catalyzes polyubiquitination from monoubiquitin, leading to degradation by the proteasome. USP47 mediates the deubiquitination of monoubiquitinated protein, preventing polyubiquitination by STUB1/CHIP and its subsequent degradation.

It is found in the nucleus. The protein resides in the cytoplasm. It catalyses the reaction DNA(n) + a 2'-deoxyribonucleoside 5'-triphosphate = DNA(n+1) + diphosphate. It carries out the reaction a 5'-end 2'-deoxyribose-2'-deoxyribonucleotide-DNA = (2E,4S)-4-hydroxypenten-2-al-5-phosphate + a 5'-end 5'-phospho-2'-deoxyribonucleoside-DNA + H(+). The enzyme catalyses 2'-deoxyribonucleotide-(2'-deoxyribose 5'-phosphate)-2'-deoxyribonucleotide-DNA = a 3'-end 2'-deoxyribonucleotide-(2,3-dehydro-2,3-deoxyribose 5'-phosphate)-DNA + a 5'-end 5'-phospho-2'-deoxyribonucleoside-DNA + H(+). Repair polymerase that plays a key role in base-excision repair. During this process, the damaged base is excised by specific DNA glycosylases, the DNA backbone is nicked at the abasic site by an apurinic/apyrimidic (AP) endonuclease, and POLB removes 5'-deoxyribose-phosphate from the preincised AP site acting as a 5'-deoxyribose-phosphate lyase (5'-dRP lyase); through its DNA polymerase activity, it adds one nucleotide to the 3' end of the arising single-nucleotide gap. Conducts 'gap-filling' DNA synthesis in a stepwise distributive fashion rather than in a processive fashion as for other DNA polymerases. It is also able to cleave sugar-phosphate bonds 3' to an intact AP site, acting as an AP lyase. The sequence is that of DNA polymerase beta (POLB) from Bos taurus (Bovine).